The chain runs to 901 residues: Cyanophycin synthetase (901 aa).

The region spanning Lys-224 to Phe-478 is the ATP-grasp domain. Gly-493 to Thr-499 contributes to the ATP binding site.

In the C-terminal section; belongs to the MurCDEF family. In terms of assembly, homodimer.

The catalysed reaction is [L-4-(L-arginin-2-N-yl)aspartate](n) + L-aspartate + ATP = [L-4-(L-arginin-2-N-yl)aspartate](n)-L-aspartate + ADP + phosphate + H(+). It carries out the reaction [L-4-(L-arginin-2-N-yl)aspartate](n)-L-aspartate + L-arginine + ATP = [L-4-(L-arginin-2-N-yl)aspartate](n+1) + ADP + phosphate + H(+). Its function is as follows. Catalyzes the ATP-dependent polymerization of arginine and aspartate to multi-L-arginyl-poly-L-aspartic acid (cyanophycin; a water-insoluble reserve polymer). The chain is Cyanophycin synthetase (cphA) from Trichormus variabilis (strain ATCC 29413 / PCC 7937) (Anabaena variabilis).